The primary structure comprises 96 residues: Putative septation protein SpoVG (96 aa).

The protein belongs to the SpoVG family.

Could be involved in septation. This chain is Putative septation protein SpoVG, found in Phytoplasma australiense.